Here is a 193-residue protein sequence, read N- to C-terminus: MKLYTKTGDKGQTGLVGGRTDKDSLRVESYGTIDELNSFIGLALAELSGQPGFEDLTAELLTIQHELFDCGGDLAIVTERKDYKLTEESVSFLETRIDAYTAEAPELKKFILPGGSKCASLLHIARTITRRAERRVVALMKSEEIHETVLRYLNRLSDYFFAAARVVNARSGIGDVEYERSAIVFRDRNSSES.

ATP is bound by residues 5-13 (TKTGDKGQT), lysine 22, 130-135 (RRAERR), and asparagine 154.

The protein belongs to the Cob(I)alamin adenosyltransferase family. Homotrimer.

It is found in the cytoplasm. The catalysed reaction is 2 cob(II)yrinate a,c diamide + reduced [electron-transfer flavoprotein] + 2 ATP = 2 adenosylcob(III)yrinate a,c-diamide + 2 triphosphate + oxidized [electron-transfer flavoprotein] + 3 H(+). It carries out the reaction 2 cob(II)alamin + reduced [electron-transfer flavoprotein] + 2 ATP = 2 adenosylcob(III)alamin + 2 triphosphate + oxidized [electron-transfer flavoprotein] + 3 H(+). It functions in the pathway cofactor biosynthesis; adenosylcobalamin biosynthesis; adenosylcobalamin from cob(II)yrinate a,c-diamide: step 2/7. The polypeptide is Corrinoid adenosyltransferase (yvqK) (Bacillus subtilis (strain 168)).